The chain runs to 381 residues: Heme A synthase (381 aa).

A disordered region spans residues 1-28; it reads MSNRTIFEEVSSDSKQQSSPTPGGIDRK. A run of 8 helical transmembrane segments spans residues 36 to 56, 125 to 145, 151 to 171, 187 to 207, 230 to 250, 287 to 307, 320 to 340, and 344 to 364; these read IRVW…VGGL, VIGL…SIPT, LLLP…MVAS, LATH…YMFL, STGL…VAGI, LVQF…VVVW, FAFN…IVTV, and APVE…VLIL. His-292 is a heme binding site. Position 352 (His-352) interacts with heme.

This sequence belongs to the COX15/CtaA family. Type 2 subfamily. Interacts with CtaB. Requires heme b as cofactor.

The protein resides in the cell membrane. The catalysed reaction is Fe(II)-heme o + 2 A + H2O = Fe(II)-heme a + 2 AH2. The protein operates within porphyrin-containing compound metabolism; heme A biosynthesis; heme A from heme O: step 1/1. Catalyzes the conversion of heme O to heme A by two successive hydroxylations of the methyl group at C8. The first hydroxylation forms heme I, the second hydroxylation results in an unstable dihydroxymethyl group, which spontaneously dehydrates, resulting in the formyl group of heme A. This is Heme A synthase from Ruegeria sp. (strain TM1040) (Silicibacter sp.).